The sequence spans 181 residues: Protoporphyrinogen IX dehydrogenase [quinone] (181 aa).

Residues 3–172 (TLILFSTRDG…QVANFAREIA (170 aa)) form the Flavodoxin-like domain. Residues 9–13 (TRDGQ) and 84–152 (FYSV…ETDT) contribute to the FMN site.

Belongs to the HemG family. The cofactor is FMN.

Its subcellular location is the cell inner membrane. The catalysed reaction is protoporphyrinogen IX + 3 a menaquinone = protoporphyrin IX + 3 a menaquinol. It carries out the reaction protoporphyrinogen IX + 3 a ubiquinone = protoporphyrin IX + 3 a ubiquinol. The enzyme catalyses protoporphyrinogen IX + 3 a quinone = protoporphyrin IX + 3 a quinol. It participates in porphyrin-containing compound metabolism; protoporphyrin-IX biosynthesis; protoporphyrin-IX from protoporphyrinogen-IX: step 1/1. Catalyzes the 6-electron oxidation of protoporphyrinogen IX to form protoporphyrin IX; under anaerobic conditions uses menaquinone as an electron acceptor, under aerobic condition uses ubiquinone as an electron acceptor. The protein is Protoporphyrinogen IX dehydrogenase [quinone] of Escherichia coli O157:H7.